The following is a 1889-amino-acid chain: Bromodomain adjacent to zinc finger domain protein 2A (1889 aa).

Disordered stretches follow at residues 1–59, 384–433, and 479–526; these read MEME…NGLS, FGLN…SPAA, and TTPV…GAVA. A compositionally biased stretch (polar residues) spans 35–59; that stretch reads TNGSPMNFPQQGKSLNGDVNVNGLS. The interval 332 to 726 is required for TTF1 binding; that stretch reads EGNPVISALD…ESQTPVQGQA (395 aa). The segment covering 423–433 has biased composition (low complexity); it reads PAVSPTASPAA. Composition is skewed to polar residues over residues 479-489 and 498-509; these read TTPVTSPQGSP and QTVSPARKNVSS. At threonine 499 the chain carries Phosphothreonine. Serine 501 bears the Phosphoserine mark. An MBD domain is found at 538-609; the sequence is IATPEEVRLP…EHFSFSPRMP (72 aa). Threonine 540 bears the Phosphothreonine mark. Residue serine 605 is modified to Phosphoserine. A disordered region spans residues 638-791; that stretch reads QAITGKRGRP…ARPSCRADKT (154 aa). DNA-binding regions (a.T hook) lie at residues 641–653 and 662–674; these read TGKRGRPRNNEKA and KRGRGRPPKIKMP. Positions 648–660 are enriched in basic and acidic residues; that stretch reads RNNEKAKNKEVPK. Over residues 661–670 the composition is skewed to basic residues; the sequence is VKRGRGRPPK. Lysine 672 carries the post-translational modification N6-acetyllysine; by KAT8. The span at 678–701 shows a compositional bias: basic and acidic residues; the sequence is NKTDNRLPKKLETQEILSEDDKAK. The stretch at 686–813 forms a coiled coil; sequence KKLETQEILS…QQAILEEMKK (128 aa). Positions 702-713 are enriched in basic residues; it reads MTKNKKKMRQKV. Polar residues predominate over residues 716 to 726; it reads GESQTPVQGQA. Basic and acidic residues-rich tracts occupy residues 731 to 740 and 748 to 791; these read KQDTKSLKQK and AEKE…ADKT. Lysine 790 bears the N6-acetyllysine mark. Residues 839–904 form the DDT domain; the sequence is SRAFSDCLTI…LKAALHDPGL (66 aa). Lysine 857 is covalently cross-linked (Glycyl lysine isopeptide (Lys-Gly) (interchain with G-Cter in SUMO2)). The tract at residues 1039–1063 is disordered; the sequence is EETSGIEEEEEEENTTAVHGRRGRK. Serine 1042 carries the phosphoserine modification. The segment covering 1042-1052 has biased composition (acidic residues); the sequence is SGIEEEEEEEN. Glycyl lysine isopeptide (Lys-Gly) (interchain with G-Cter in SUMO2) cross-links involve residues lysine 1141 and lysine 1163. 2 disordered regions span residues 1147-1247 and 1269-1397; these read LMEV…GQSQ and LSSS…GRPP. Position 1174 is a phosphoserine (serine 1174). A DNA-binding region (a.T hook 3) is located at residues 1176–1188; it reads ARSRGRPRKPKPG. Polar residues-rich tracts occupy residues 1190-1231, 1269-1278, and 1331-1346; these read LQPQ…QPSS, LSSSVLTPDS, and DQPTPSLQLLASSKPM. Phosphoserine occurs at positions 1374, 1377, and 1383. The a.T hook 4 DNA-binding region spans 1390–1402; that stretch reads PKRRGRPPSKFFK. A Phosphoserine modification is found at serine 1545. Glycyl lysine isopeptide (Lys-Gly) (interchain with G-Cter in SUMO2) cross-links involve residues lysine 1662 and lysine 1695. The PHD-type zinc-finger motif lies at 1662–1712; the sequence is KVTCLVCRKGDNDEFLLLCDGCDRGCHIYCHRPKMEAVPEGDWFCAVCLSQ. A disordered region spans residues 1720 to 1778; it reads QRPGFPKRGQKRKSSFPLTFPEGDSRRRMLSRSRDSPAVPRYPEDGLSPPKRRRHSMRS. Serine 1733 carries the post-translational modification Phosphoserine. Threonine 1738 carries the phosphothreonine modification. Over residues 1742–1754 the composition is skewed to basic and acidic residues; that stretch reads GDSRRRMLSRSRD. Phosphoserine occurs at positions 1755 and 1767. Basic residues predominate over residues 1769–1778; sequence PKRRRHSMRS. A Bromo domain is found at 1777–1881; it reads RSHHSDLTFC…RFFESRWEEF (105 aa).

It belongs to the WAL family. In terms of assembly, component of the NoRC-1 ISWI chromatin remodeling complex at least composed of SMARCA1 and BAZ2A/TIP5, which regulates the spacing of histone octamers on the DNA template to facilitate access to DNA. Within the NoRC-1 ISWI chromatin remodeling complex interacts with SMARCA1; the interaction is direct. Component of the NoRC-5 ISWI chromatin remodeling complex (also called the NoRC nucleolar-remodeling complex), at least composed of SMARCA5/SNF2H and BAZ2A/TIP5, which regulates the spacing of histone octamers on the DNA template to facilitate access to DNA. Within the NoRC-5 ISWI chromatin remodeling complexes interacts with SMARCA5/SNF2H; the interaction is direct. Interacts with TTF1; the interaction is required for recruitment of the NoRC-5 ISWI chromatin remodeling complex to rDNA. Interacts with HDAC1. Interacts with SIN3A. Interacts with DNMT1 and DNM3B. Interacts with BEND3 and USP21. Post-translationally, ubiquitinated. Deubiquitinated by USP21 leading to its stabilization. Acetylation at Lys-672 by KAT8/MOF promotes its dissociation from pRNA, affecting heterochromatin formation, nucleosome positioning and rDNA silencing. Deacetylation by SIRT1 in late S phase enhances pRNA-binding, allowing de novo DNA methylation and heterochromatin formation. Acetylation is high during S phase and declines to background levels in late S phase when the silent copies of rRNA genes are replicated.

It is found in the nucleus. The protein resides in the nucleolus. In terms of biological role, regulatory subunit of the ATP-dependent NoRC-1 and NoRC-5 ISWI chromatin remodeling complexes, which form ordered nucleosome arrays on chromatin and facilitate access to DNA during DNA-templated processes such as DNA replication, transcription, and repair. Both complexes regulate the spacing of nucleosomes along the chromatin and have the ability to slide mononucleosomes to the center of a DNA template. Directly stimulates the ATPase activity of SMARCA5 in the NoRC-5 ISWI chromatin remodeling complex. The NoRC-1 ISWI chromatin remodeling complex has a lower ATP hydrolysis rate than the NoRC-5 ISWI chromatin remodeling complex. Within the NoRC-5 ISWI chromatin remodeling complex, mediates silencing of a fraction of rDNA by recruiting histone-modifying enzymes and DNA methyltransferases, leading to heterochromatin formation and transcriptional silencing. In the complex, it plays a central role by being recruited to rDNA and by targeting chromatin modifying enzymes such as HDAC1, leading to repress RNA polymerase I transcription. Recruited to rDNA via its interaction with TTF1 and its ability to recognize and bind histone H4 acetylated on 'Lys-16' (H4K16ac), leading to deacetylation of H4K5ac, H4K8ac, H4K12ac but not H4K16ac. Specifically binds pRNAs, 150-250 nucleotide RNAs that are complementary in sequence to the rDNA promoter; pRNA-binding is required for heterochromatin formation and rDNA silencing. In Mus musculus (Mouse), this protein is Bromodomain adjacent to zinc finger domain protein 2A (Baz2a).